A 480-amino-acid chain; its full sequence is Glutamate--tRNA ligase (480 aa).

The 'HIGH' region signature appears at 21–31 (PSPTGYLHVGG). Residues cysteine 110, cysteine 112, cysteine 137, and histidine 139 each coordinate Zn(2+). The 'KMSKS' region motif lies at 248-252 (KLSKR). Lysine 251 provides a ligand contact to ATP.

The protein belongs to the class-I aminoacyl-tRNA synthetase family. Glutamate--tRNA ligase type 1 subfamily. As to quaternary structure, monomer. The cofactor is Zn(2+).

The protein resides in the cytoplasm. The catalysed reaction is tRNA(Glu) + L-glutamate + ATP = L-glutamyl-tRNA(Glu) + AMP + diphosphate. Functionally, catalyzes the attachment of glutamate to tRNA(Glu) in a two-step reaction: glutamate is first activated by ATP to form Glu-AMP and then transferred to the acceptor end of tRNA(Glu). This chain is Glutamate--tRNA ligase, found in Haemophilus influenzae (strain PittEE).